Here is a 1181-residue protein sequence, read N- to C-terminus: WD repeat-containing protein 35 (1181 aa).

WD repeat units lie at residues 12–51 (PNNV…DDSK), 69–108 (GHSG…WYEE), 113–152 (RNKS…IWGK), 154–193 (LKGI…IMKM), and 502–539 (GTRD…LIQK).

In terms of assembly, component of the IFT complex A (IFT-A) complex. IFT-A complex is divided into a core subcomplex composed of IFT122:IFT140:WDR19 which is associated with TULP3 and a peripheral subcomplex composed of IFT43:WDR35:TTC21B. Interacts directy with IFT122, ITF43 and TTC21B. Interacts with IFT43. Interacts with CFAP61.

The protein localises to the cytoplasm. The protein resides in the cytoskeleton. It localises to the microtubule organizing center. It is found in the centrosome. Its subcellular location is the cilium axoneme. The protein localises to the cilium basal body. As a component of the IFT complex A (IFT-A), a complex required for retrograde ciliary transport and entry into cilia of G protein-coupled receptors (GPCRs), it is involved in ciliogenesis and ciliary protein trafficking. May promote CASP3 activation and TNF-stimulated apoptosis. This is WD repeat-containing protein 35 from Mus musculus (Mouse).